A 115-amino-acid polypeptide reads, in one-letter code: NAD(P)H-quinone oxidoreductase subunit M (115 aa).

Belongs to the complex I NdhM subunit family. In terms of assembly, NDH-1 can be composed of about 15 different subunits; different subcomplexes with different compositions have been identified which probably have different functions.

The protein localises to the cellular thylakoid membrane. It carries out the reaction a plastoquinone + NADH + (n+1) H(+)(in) = a plastoquinol + NAD(+) + n H(+)(out). The catalysed reaction is a plastoquinone + NADPH + (n+1) H(+)(in) = a plastoquinol + NADP(+) + n H(+)(out). NDH-1 shuttles electrons from an unknown electron donor, via FMN and iron-sulfur (Fe-S) centers, to quinones in the respiratory and/or the photosynthetic chain. The immediate electron acceptor for the enzyme in this species is believed to be plastoquinone. Couples the redox reaction to proton translocation, and thus conserves the redox energy in a proton gradient. Cyanobacterial NDH-1 also plays a role in inorganic carbon-concentration. The protein is NAD(P)H-quinone oxidoreductase subunit M of Prochlorococcus marinus (strain AS9601).